Consider the following 193-residue polypeptide: 2',3'-cyclic-nucleotide 3'-phosphodiesterase (193 aa).

His40 functions as the Proton donor/acceptor in the catalytic mechanism. Position 42 (Thr42) interacts with substrate. The active-site Proton donor/acceptor is His129. Positions 131 and 134 each coordinate substrate.

This sequence belongs to the 2H phosphoesterase superfamily. CPD1 family.

It localises to the golgi apparatus. It carries out the reaction a nucleoside 2',3'-cyclic phosphate + H2O = a nucleoside 2'-phosphate + H(+). Its function is as follows. Involved in the metabolism of ADP-ribose 1',2'-cyclic phosphate which is produced as a consequence of tRNA splicing. The protein is 2',3'-cyclic-nucleotide 3'-phosphodiesterase (CPD1) of Phaeosphaeria nodorum (strain SN15 / ATCC MYA-4574 / FGSC 10173) (Glume blotch fungus).